The sequence spans 211 residues: Fucoxanthin-chlorophyll a-c binding protein F, chloroplastic (211 aa).

The N-terminal 33 residues, 1–33, are a transit peptide targeting the chloroplast; the sequence is AIACAAAPGLRGPSAFNGAALSTPAKSSSAMKM. Transmembrane regions (helical) follow at residues 75-95, 116-136, and 177-197; these read IAMLAIAGHLTQQNTRLPGML, IPPGGLAQIFGFIGFLELAVM, and GRAAQMGILGMMVHEELSNQP.

Belongs to the fucoxanthin chlorophyll protein family. The LHC complex of chromophytic algae is composed of fucoxanthin, chlorophyll A and C bound non-covalently by fucoxanthin chlorophyll proteins (FCPs). The ratio of pigments in this LHC is; fucoxanthin: chlorophyll C: chlorophyll A; (0.6-1): (0.1-0.3): (1).

The protein localises to the plastid. The protein resides in the chloroplast thylakoid membrane. Functionally, the light-harvesting complex (LHC) functions as a light receptor, it captures and delivers excitation energy to photosystems with which it is closely associated. Energy is transferred from the carotenoid and chlorophyll C (or B) to chlorophyll A and the photosynthetic reaction centers where it is used to synthesize ATP and reducing power. The polypeptide is Fucoxanthin-chlorophyll a-c binding protein F, chloroplastic (FCPF) (Macrocystis pyrifera (Giant kelp)).